Here is a 170-residue protein sequence, read N- to C-terminus: Heat shock protein beta-7 (170 aa).

Positions Met1 to Pro39 are disordered. Residues Met1–Gly71 are required for localization to SC35 splicing speckles. Positions His16–Ser31 are enriched in low complexity. A sHSP domain is found at Pro62–Ile170.

This sequence belongs to the small heat shock protein (HSP20) family. In terms of assembly, interacts with C-terminal domain of actin-binding protein 280. Isoform 1 is highly expressed in adult and fetal heart, skeletal muscle, and at a much lower levels in adipose tissue and in aorta. Undetectable in other tissues. Isoform 2 and isoform 3 are poorly detected in heart.

The protein resides in the cytoplasm. It is found in the nucleus. It localises to the cajal body. In Homo sapiens (Human), this protein is Heat shock protein beta-7 (HSPB7).